Here is a 417-residue protein sequence, read N- to C-terminus: Squalene synthase (417 aa).

NADP(+)-binding residues include Arg-52 and Arg-77. Residues Asp-80, Glu-83, and Asp-84 each contribute to the Mg(2+) site. Arg-218 is a binding site for NADP(+). A helical membrane pass occupies residues 284 to 304; sequence SVFNFCAIPQVMAIATLAACY. Residues Lys-315 and Arg-317 each coordinate NADP(+). A helical transmembrane segment spans residues 384–404; that stretch reads PIYLSFVMLLAALSWQYLTTL.

It belongs to the phytoene/squalene synthase family. Mg(2+) is required as a cofactor. As to expression, widely expressed.

Its subcellular location is the endoplasmic reticulum membrane. It catalyses the reaction 2 (2E,6E)-farnesyl diphosphate + NADPH + H(+) = squalene + 2 diphosphate + NADP(+). The catalysed reaction is 2 (2E,6E)-farnesyl diphosphate + NADH + H(+) = squalene + 2 diphosphate + NAD(+). The enzyme catalyses 2 (2E,6E)-farnesyl diphosphate = presqualene diphosphate + diphosphate. It carries out the reaction presqualene diphosphate + NADH + H(+) = squalene + diphosphate + NAD(+). It catalyses the reaction presqualene diphosphate + NADPH + H(+) = squalene + diphosphate + NADP(+). It participates in terpene metabolism; lanosterol biosynthesis; lanosterol from farnesyl diphosphate: step 1/3. Its function is as follows. Catalyzes the condensation of 2 farnesyl pyrophosphate (FPP) moieties to form squalene. Proceeds in two distinct steps. In the first half-reaction, two molecules of FPP react to form the stable presqualene diphosphate intermediate (PSQPP), with concomitant release of a proton and a molecule of inorganic diphosphate. In the second half-reaction, PSQPP undergoes heterolysis, isomerization, and reduction with NADPH or NADH to form squalene. It is the first committed enzyme of the sterol biosynthesis pathway. The protein is Squalene synthase (FDFT1) of Homo sapiens (Human).